Reading from the N-terminus, the 160-residue chain is Vegetative-specific protein V4 (160 aa).

Tandem repeats lie at residues 151–153 (NQP), 154–156 (NQP), and 157–159 (NQG). Residues 151–159 (NQPNQPNQG) are 3 X 3 AA tandem repeats of N-Q-[PG].

In terms of biological role, unknown. Its expression during growth is not required for growth but for the proper initiation of development, therefore playing a role in the transition from growth to development. This Dictyostelium discoideum (Social amoeba) protein is Vegetative-specific protein V4 (lmcB).